Here is an 812-residue protein sequence, read N- to C-terminus: Transcription-repair-coupling factor (812 aa).

A Helicase ATP-binding domain is found at 280–441 (DMSKPIPMDR…MTGIKDLSII (162 aa)). 293–300 (GDVGFGKT) contacts ATP. The DEEH box signature appears at 394–397 (DEEH). The region spanning 462-621 (LIRKTILREI…NQDLEIRGVG (160 aa)) is the Helicase C-terminal domain.

It in the N-terminal section; belongs to the UvrB family. This sequence in the C-terminal section; belongs to the helicase family. RecG subfamily.

Its subcellular location is the cytoplasm. Couples transcription and DNA repair by recognizing RNA polymerase (RNAP) stalled at DNA lesions. Mediates ATP-dependent release of RNAP and its truncated transcript from the DNA, and recruitment of nucleotide excision repair machinery to the damaged site. The protein is Transcription-repair-coupling factor (mfd) of Buchnera aphidicola subsp. Acyrthosiphon pisum (strain APS) (Acyrthosiphon pisum symbiotic bacterium).